Here is a 246-residue protein sequence, read N- to C-terminus: Probable transcriptional regulatory protein RB5500 (246 aa).

This sequence belongs to the TACO1 family.

The protein localises to the cytoplasm. This is Probable transcriptional regulatory protein RB5500 from Rhodopirellula baltica (strain DSM 10527 / NCIMB 13988 / SH1).